Reading from the N-terminus, the 351-residue chain is Phosphoribosylformylglycinamidine cyclo-ligase (351 aa).

Belongs to the AIR synthase family.

It is found in the cytoplasm. It catalyses the reaction 2-formamido-N(1)-(5-O-phospho-beta-D-ribosyl)acetamidine + ATP = 5-amino-1-(5-phospho-beta-D-ribosyl)imidazole + ADP + phosphate + H(+). It participates in purine metabolism; IMP biosynthesis via de novo pathway; 5-amino-1-(5-phospho-D-ribosyl)imidazole from N(2)-formyl-N(1)-(5-phospho-D-ribosyl)glycinamide: step 2/2. The chain is Phosphoribosylformylglycinamidine cyclo-ligase from Burkholderia mallei (strain NCTC 10247).